We begin with the raw amino-acid sequence, 249 residues long: Low affinity immunoglobulin gamma Fc region receptor III-A (249 aa).

The signal sequence occupies residues 1-20 (MWQLLLPTALVLTAFSGIQA). Residues 21–203 (GLQKAVVNLD…SPSMFPPWHQ (183 aa)) lie on the Extracellular side of the membrane. 2 consecutive Ig-like C2-type domains span residues 22 to 102 (LQKA…VQLE) and 119 to 188 (EGDP…FRIS). 2 disulfide bridges follow: C46-C88 and C127-C171. N-linked (GlcNAc...) asparagine glycans are attached at residues N62, N164, and N179. The helical transmembrane segment at 204–224 (ITFCLLIGLLFAIDTVLYFSV) threads the bilayer. Residues 225–249 (RRGLQSPVADYEEPKIQWSKEPQDK) lie on the Cytoplasmic side of the membrane. Position 235 is a phosphotyrosine (Y235).

In terms of assembly, forms a heterooligomeric complex with ITAM-containing signaling subunits FCER1G. Interacts (via transmembrane domain) with signaling subunits; this interaction is a prerequisite for receptor complex expression on the cell surface and intracellular signal transduction. Binds the Fc region of antigen-complexed IgG. N-glycosylated. In terms of processing, phosphorylated following receptor ligation. As to expression, detected on myeloid cells, peripheral blood monocytes, splenic and bone marrow dendritic cells, and thioglycollate-elicited macrophages and neutrophils but absent from lymphoid populations with no expression observed on T cells, B cells, NK cells or other granulocytes (at protein level). Expressed in peripheral blood leukocytes, spleen, liver, thymus and small intestine. Expressed in splenic dendritic cell subsets (at protein level).

It localises to the cell membrane. Its function is as follows. Receptor for the invariable Fc fragment of immunoglobulin gamma (IgG). Binds with intermediate affinity to both IgG2a and IgG2b. Can bind to IgG2a and IgG2b monomers. Does not display binding to IgG1 or IgG3. Recognizes neutralizing virus-specific IgGs displayed on the cell surface of infected cells and triggers antibody-dependent cellular cytotoxicity (ADCC). Confers protection to lethal influenza virus infection. On splenic dendritic cells, uptakes antigen immune complexes and efficiently divert them into MHC class I and II antigen presentation pathways to provide for superior priming of CD4-positive and CD8-positive T cell immune responses. Mediates neutrophil activation by IgG complexes redundantly with FCGR2A. Plays a role in promoting bone resorption by enhancing osteoclast differentiation following binding to IgG2a. Also acts as a receptor for the Fc region of immunoglobulin epsilon (IgE). Binds with low affinity to both the a and b allotypes of IgE. Has also been shown to bind to IgE allotype a only but not to allotype b. Binds aggregated IgE but not the monomeric form and bound monomeric IgG is readily displaced by IgE complexes. Binding to IgE promotes macrophage-mediated phagocytosis, antigen presentation to T cells, production of pro-inflammatory cytokines and the late phase of cutaneous allergic reactions. Mediates enhanced ADCC in response to afucosylated IgGs. This chain is Low affinity immunoglobulin gamma Fc region receptor III-A, found in Mus musculus (Mouse).